A 126-amino-acid chain; its full sequence is RutC family protein bbp_334 (126 aa).

This sequence belongs to the RutC family.

The sequence is that of RutC family protein bbp_334 from Buchnera aphidicola subsp. Baizongia pistaciae (strain Bp).